A 314-amino-acid chain; its full sequence is Olfactory receptor 1E16 (314 aa).

Over 1–29 (MTERNKTVISQFLLLGLPIPPEHQQLFYA) the chain is Extracellular. Asn-5 carries an N-linked (GlcNAc...) asparagine glycan. Residues 30–50 (LFLVMYLTTVLGNLIIIILII) form a helical membrane-spanning segment. Residues 51 to 57 (LDSHLHT) lie on the Cytoplasmic side of the membrane. A helical transmembrane segment spans residues 58 to 78 (PMYLFLSNLSFSDLCFSSVTM). Residues 79-97 (PKLLQNMQSQVPSIPYAGC) lie on the Extracellular side of the membrane. Cys-97 and Cys-179 are disulfide-bonded. Residues 98–118 (LAQIYFFLFFGDLGNFLLVAM) form a helical membrane-spanning segment. The Cytoplasmic segment spans residues 119–143 (AYDRYVAICYPLHYTTIMSPRLCVS). Residues 144 to 164 (LVVLSWVLTTFHAMLHTLLMA) form a helical membrane-spanning segment. The Extracellular portion of the chain corresponds to 165–196 (RLSFCEDNVIPHYFCDMSALLKLACSDTRVNE). A helical transmembrane segment spans residues 197 to 217 (VVIFIVASIFLVLPFALITMS). The Cytoplasmic portion of the chain corresponds to 218-239 (YVRIVSSILKVPSSQGIYKAFS). A helical transmembrane segment spans residues 240 to 260 (TCGSHLSVVSLFYGTVIGLYL). The Extracellular portion of the chain corresponds to 261-271 (SPSSNNSTVKD). 2 N-linked (GlcNAc...) asparagine glycosylation sites follow: Asn-265 and Asn-266. Residues 272–292 (TVMSLMYTVVTPMLNPFIYSL) traverse the membrane as a helical segment. At 293–314 (RNRDIKGALERVFCKRKIQLNL) the chain is on the cytoplasmic side.

This sequence belongs to the G-protein coupled receptor 1 family. As to expression, olfactory epithelium.

It localises to the cell membrane. Odorant receptor. Activated by a lily-derived aldehyde as well as other odorants. May signal through an inositol 1,4,5-trisphosphate (IP3) second messenger system. This is Olfactory receptor 1E16 from Mus musculus (Mouse).